The following is a 208-amino-acid chain: Small ribosomal subunit protein uS4 (208 aa).

The 63-residue stretch at 98 to 160 folds into the S4 RNA-binding domain; that stretch reads RRLDNVVYRL…SKSKTRFVEI (63 aa).

This sequence belongs to the universal ribosomal protein uS4 family. Part of the 30S ribosomal subunit. Contacts protein S5. The interaction surface between S4 and S5 is involved in control of translational fidelity.

Its function is as follows. One of the primary rRNA binding proteins, it binds directly to 16S rRNA where it nucleates assembly of the body of the 30S subunit. With S5 and S12 plays an important role in translational accuracy. This is Small ribosomal subunit protein uS4 from Caldicellulosiruptor bescii (strain ATCC BAA-1888 / DSM 6725 / KCTC 15123 / Z-1320) (Anaerocellum thermophilum).